The primary structure comprises 528 residues: DNA damage-binding protein cmr1 (528 aa).

Disordered stretches follow at residues 32 to 98 (AQSS…QYEA) and 217 to 243 (DASQ…DPDP). Residues 52 to 62 (KPKKKPPPKKV) show a composition bias toward basic residues. The stretch at 185 to 226 (LTPERIYTMTFHPSEAKPLIFAGDKMGNLGVLDASQEKPTSA) is one WD 1 repeat. Positions 230–242 (EDDEEDAEDDDPD) are enriched in acidic residues. WD repeat units follow at residues 250–290 (PHTR…SVEK), 297–337 (SDDI…RSAV), 342–382 (LSEK…HDDP), 389–428 (VSRL…AAWE), 451–494 (GRWV…LAQL), and 497–528 (DGIT…CLWM).

It belongs to the WD repeat DDB2/WDR76 family.

Functionally, DNA-binding protein that binds to both single- and double-stranded DNA. Binds preferentially to UV-damaged DNA. May be involved in DNA-metabolic processes. This chain is DNA damage-binding protein cmr1, found in Aspergillus fumigatus (strain CBS 144.89 / FGSC A1163 / CEA10) (Neosartorya fumigata).